Consider the following 224-residue polypeptide: Cysteine S-methyltransferase NleE (224 aa).

Residues 49–52 are interaction with host proteins TAB2, TAB3 and ZRANB3; it reads GITR. Positions 92, 98, 107, 111, 204, and 208 each coordinate S-adenosyl-L-methionine.

The protein belongs to the NleE/OspZ family. In terms of assembly, monomer.

Its subcellular location is the secreted. The protein localises to the host nucleus. It carries out the reaction L-cysteinyl-[protein] + S-adenosyl-L-methionine = S-methyl-L-cysteinyl-[protein] + S-adenosyl-L-homocysteine + H(+). Its function is as follows. Cysteine methyltransferase effector that inhibits host cell NF-kappa-B activation by preventing nuclear translocation of host protein RELA/p65. Acts by mediating cysteine methylation of host proteins TAB2 and TAB3: methylation of a conserved cysteine residue of the RanBP2-type zinc finger (NZF) of TAB2 and TAB3 disrupts zinc-binding, thereby inactivating the ubiquitin chain-binding activity of TAB2 and TAB3, leading to NF-kappa-B inactivation. Also mediates cysteine methylation of host protein ZRANB3, inactivating its ability to bind ubiquitin chains. The chain is Cysteine S-methyltransferase NleE from Escherichia coli O157:H7.